The primary structure comprises 307 residues: MAKKKIAISCGDIQGVGLELILKSHKEVNAFCEPLYLIDGELLERANQLLHNAYETKTLNALAIHSPLPLLNSSTIGKISAQSGAYSFESFKKACELADSEEVDGICTLPINKLAWQQAQIPFVGHTDFLKQRYKEHQIIMMLGCSKLFVGLFSDHVPLSAVSQLIQVEALVKFLLAFQKSTQAKIVQVCGFNPHAGEEGLFGKEDEKILKAIQKSNQTLGFECFLGPLPADSAFAPNKRKITPFYVSMSHDVGLAPLKALYFDESINVSLNAPILRVSTDHGTAFDIAYQNKANNKSYLNAIKYLA.

Residues H126 and T127 each coordinate substrate. H156, H195, and H251 together coordinate a divalent metal cation. Positions 259, 268, and 277 each coordinate substrate.

The protein belongs to the PdxA family. In terms of assembly, homodimer. Requires Zn(2+) as cofactor. Mg(2+) serves as cofactor. It depends on Co(2+) as a cofactor.

It is found in the cytoplasm. The enzyme catalyses 4-(phosphooxy)-L-threonine + NAD(+) = 3-amino-2-oxopropyl phosphate + CO2 + NADH. Its pathway is cofactor biosynthesis; pyridoxine 5'-phosphate biosynthesis; pyridoxine 5'-phosphate from D-erythrose 4-phosphate: step 4/5. Functionally, catalyzes the NAD(P)-dependent oxidation of 4-(phosphooxy)-L-threonine (HTP) into 2-amino-3-oxo-4-(phosphooxy)butyric acid which spontaneously decarboxylates to form 3-amino-2-oxopropyl phosphate (AHAP). The polypeptide is 4-hydroxythreonine-4-phosphate dehydrogenase (Helicobacter pylori (strain P12)).